Consider the following 365-residue polypeptide: Chorismate synthase (365 aa).

Positions 48 and 54 each coordinate NADP(+). FMN is bound by residues 131-133 (RSS), 243-244 (NA), glycine 288, 303-307 (KPTSS), and arginine 329.

The protein belongs to the chorismate synthase family. In terms of assembly, homotetramer. FMNH2 is required as a cofactor.

It carries out the reaction 5-O-(1-carboxyvinyl)-3-phosphoshikimate = chorismate + phosphate. The protein operates within metabolic intermediate biosynthesis; chorismate biosynthesis; chorismate from D-erythrose 4-phosphate and phosphoenolpyruvate: step 7/7. Catalyzes the anti-1,4-elimination of the C-3 phosphate and the C-6 proR hydrogen from 5-enolpyruvylshikimate-3-phosphate (EPSP) to yield chorismate, which is the branch point compound that serves as the starting substrate for the three terminal pathways of aromatic amino acid biosynthesis. This reaction introduces a second double bond into the aromatic ring system. The protein is Chorismate synthase of Rhizobium etli (strain CIAT 652).